A 217-amino-acid chain; its full sequence is Uracil-DNA glycosylase (217 aa).

Asp-62 (proton acceptor) is an active-site residue.

Belongs to the uracil-DNA glycosylase (UDG) superfamily. UNG family.

Its subcellular location is the cytoplasm. It carries out the reaction Hydrolyzes single-stranded DNA or mismatched double-stranded DNA and polynucleotides, releasing free uracil.. In terms of biological role, excises uracil residues from the DNA which can arise as a result of misincorporation of dUMP residues by DNA polymerase or due to deamination of cytosine. This chain is Uracil-DNA glycosylase, found in Streptococcus gordonii (strain Challis / ATCC 35105 / BCRC 15272 / CH1 / DL1 / V288).